The primary structure comprises 396 residues: Tryptophan synthase beta chain (396 aa).

Position 86 is an N6-(pyridoxal phosphate)lysine (K86).

Belongs to the TrpB family. As to quaternary structure, tetramer of two alpha and two beta chains. Pyridoxal 5'-phosphate is required as a cofactor.

The enzyme catalyses (1S,2R)-1-C-(indol-3-yl)glycerol 3-phosphate + L-serine = D-glyceraldehyde 3-phosphate + L-tryptophan + H2O. Its pathway is amino-acid biosynthesis; L-tryptophan biosynthesis; L-tryptophan from chorismate: step 5/5. Functionally, the beta subunit is responsible for the synthesis of L-tryptophan from indole and L-serine. The polypeptide is Tryptophan synthase beta chain (Francisella philomiragia subsp. philomiragia (strain ATCC 25017 / CCUG 19701 / FSC 153 / O#319-036)).